The primary structure comprises 578 residues: Keratin, type II cytoskeletal 1b (578 aa).

Residues 1 to 163 are head; the sequence is MSHQFSSQSA…DPEIQRIKTQ (163 aa). At Arg-95 the chain carries Omega-N-methylarginine. The segment at 164-200 is coil 1A; sequence EREQIMVLNNKFASFIDKVRFLEQQNQVLQTKWELLQ. Positions 164–477 constitute an IF rod domain; sequence EREQIMVLNN…QLLEGEESRM (314 aa). Positions 201-219 are linker 1; that stretch reads QVNTSTGTNNLEPLLENYI. Residues 220-311 form a coil 1B region; the sequence is GDLRRQVDLL…LFLTELSQVQ (92 aa). The segment at 312–335 is linker 12; it reads THISDTNVILSMDNNRSLDLDSII. Positions 336–474 are coil 2; sequence DAVRTQYELI…TYRQLLEGEE (139 aa). The segment at 475 to 578 is tail; that stretch reads SRMSGELQSH…TNTSHRRILE (104 aa). The residue at position 523 (Arg-523) is an Omega-N-methylarginine. Positions 547–556 are enriched in gly residues; the sequence is GSYGGSGRSG. Residues 547-578 are disordered; the sequence is GSYGGSGRSGRGSSRVQIIQTSTNTSHRRILE. Over residues 562–571 the composition is skewed to polar residues; it reads VQIIQTSTNT.

The protein belongs to the intermediate filament family. Undergoes deimination of some arginine residues (citrullination). Expressed exclusively in skin.

This chain is Keratin, type II cytoskeletal 1b (KRT77), found in Homo sapiens (Human).